Consider the following 99-residue polypeptide: MAAVNKDPRDVIIAPVVSEKSYGLIDEGKYTFLVDPRSNKTEIKLAIESIFRVEVASVNTLNRQGKTRRTKFGLGKRKDTKRAIVTLKSGSIDIFTAVG.

Belongs to the universal ribosomal protein uL23 family. In terms of assembly, part of the 50S ribosomal subunit. Contacts protein L29, and trigger factor when it is bound to the ribosome.

In terms of biological role, one of the early assembly proteins it binds 23S rRNA. One of the proteins that surrounds the polypeptide exit tunnel on the outside of the ribosome. Forms the main docking site for trigger factor binding to the ribosome. This chain is Large ribosomal subunit protein uL23, found in Leifsonia xyli subsp. xyli (strain CTCB07).